The sequence spans 312 residues: 1-phosphofructokinase (312 aa).

Residues 223 to 228 (SLGAEG) and 254 to 255 (GD) each bind ATP. D255 (proton acceptor) is an active-site residue.

This sequence belongs to the carbohydrate kinase PfkB family.

The catalysed reaction is beta-D-fructose 1-phosphate + ATP = beta-D-fructose 1,6-bisphosphate + ADP + H(+). In terms of biological role, catalyzes the ATP-dependent phosphorylation of fructose-l-phosphate to fructose-l,6-bisphosphate. The polypeptide is 1-phosphofructokinase (fruK) (Escherichia coli O157:H7).